A 417-amino-acid polypeptide reads, in one-letter code: 2-oxoglutarate and iron-dependent oxygenase JMJD4 (417 aa).

A JmjC domain is found at 142-301 (CRDFPVEDVF…NMWRFLQQEL (160 aa)). The Fe cation site is built by His-189, Asp-191, and His-269.

This sequence belongs to the JMJD6 family. As to quaternary structure, interacts with ETF1. Interacts with the ETF1-GSPT1 complex. Fe(2+) serves as cofactor.

The protein resides in the cytoplasm. The catalysed reaction is L-lysyl-[protein] + 2-oxoglutarate + O2 = 4-hydroxy-L-lysyl-[protein] + succinate + CO2. Its function is as follows. Catalyzes the 2-oxoglutarate and iron-dependent C4-lysyl hydroxylation of ETF1 at 'Lys-63' thereby promoting the translational termination efficiency of ETF1. This Homo sapiens (Human) protein is 2-oxoglutarate and iron-dependent oxygenase JMJD4 (JMJD4).